Consider the following 570-residue polypeptide: High-affinity hexose transporter HXT6 (570 aa).

Residues 1 to 60 lie on the Cytoplasmic side of the membrane; that stretch reads MSQDAAIAEQTPVEHLSAVDSASHSVLSTPSNKAERDEIKAYGEGEEHEPVVEIPKRPAS. A helical transmembrane segment spans residues 61–81; that stretch reads AYVTVSIMCIMIAFGGFVFGW. Over 82 to 116 the chain is Extracellular; the sequence is DTGTISGFINQTDFIRRFGMKHKDGTNYLSKVRTG. N91 is a glycosylation site (N-linked (GlcNAc...) asparagine). Residues 117–137 traverse the membrane as a helical segment; the sequence is LIVSIFNIGCAIGGIILSKLG. Topologically, residues 138 to 143 are cytoplasmic; that stretch reads DMYGRK. Residues 144–164 traverse the membrane as a helical segment; sequence VGLIVVVVIYIIGIIIQIASI. The Extracellular segment spans residues 165 to 174; the sequence is NKWYQYFIGR. Residues 175-195 form a helical membrane-spanning segment; the sequence is IISGLGVGGIAVLSPMLISEV. The Cytoplasmic portion of the chain corresponds to 196-201; it reads SPKHLR. Residues 202 to 222 traverse the membrane as a helical segment; sequence GTLVSCYQLMITAGIFLGYCT. Residues 223 to 236 lie on the Extracellular side of the membrane; it reads NFGTKNYSNSVQWR. N228 carries an N-linked (GlcNAc...) asparagine glycan. Residues 237-257 traverse the membrane as a helical segment; the sequence is VPLGLCFAWALFMIGGMTFVP. Over 258-340 the chain is Cytoplasmic; the sequence is ESPRYLAEVG…IQSLQQLTGD (83 aa). Residues 341-357 form a helical membrane-spanning segment; that stretch reads NYFFYYGTTIFKAVGLS. At 358–363 the chain is on the extracellular side; it reads DSFETS. The helical transmembrane segment at 364–381 threads the bilayer; it reads IVLGIVNFASTFVGIYVV. Residues 382–388 lie on the Cytoplasmic side of the membrane; the sequence is ERYGRRT. Residues 389–409 form a helical membrane-spanning segment; that stretch reads CLLWGAASMTACMVVYASVGV. Residues 410–431 lie on the Extracellular side of the membrane; the sequence is TRLWPNGQDQPSSKGAGNCMIV. The helical transmembrane segment at 432 to 452 threads the bilayer; it reads FACFYIFCFATTWAPIPYVVV. Over 453-469 the chain is Cytoplasmic; it reads SETFPLRVKSKAMSIAT. A helical membrane pass occupies residues 470 to 490; the sequence is AANWLWGFLIGFFTPFITGAI. A topological domain (extracellular) is located at residue N491. A helical transmembrane segment spans residues 492–512; that stretch reads FYYGYVFMGCLVFMFFYVLLV. Residues 513–570 are Cytoplasmic-facing; the sequence is VPETKGLTLEEVNTMWEEGVLPWKSASWVPPSRRGANYDAEEMAHDDKPLYKRMFSTK. Residue K560 forms a Glycyl lysine isopeptide (Lys-Gly) (interchain with G-Cter in ubiquitin) linkage.

It belongs to the major facilitator superfamily. Sugar transporter (TC 2.A.1.1) family.

The protein resides in the membrane. Its function is as follows. High-affinity glucose transporter. The protein is High-affinity hexose transporter HXT6 (HXT6) of Saccharomyces cerevisiae (strain ATCC 204508 / S288c) (Baker's yeast).